We begin with the raw amino-acid sequence, 337 residues long: Mitochondrial uncoupling protein 6 (337 aa).

Solcar repeat units lie at residues 4–136, 145–236, and 246–331; these read KPFL…LKRR, FPLV…VKEI, and GGIG…VRGL. The next 6 helical transmembrane spans lie at 6–26, 105–125, 151–171, 210–230, 252–272, and 304–324; these read FLEG…LDLI, PAAL…YSAT, ITAG…ADVA, RGSW…LATY, VAAS…IDVV, and YKGL…LFLT.

The protein belongs to the mitochondrial carrier (TC 2.A.29) family.

The protein resides in the mitochondrion inner membrane. In terms of biological role, PUMPS are mitochondrial transporter proteins that create proton leaks across the inner mitochondrial membrane, thus uncoupling oxidative phosphorylation. This leads to a decrease in the efficiency of oxidative phosphorylation and an increase in heat production. May be involved in protecting plant cells against oxidative stress damage. Recombinant PUMP6, reconstituted into liposomes, transports a wide range of dicarboxylic acids including malate, oxaloacetate and succinate as well as phosphate, sulfate and thiosulfate. However, it is unknown if these transports are of any biological significance in vivo. The polypeptide is Mitochondrial uncoupling protein 6 (PUMP6) (Arabidopsis thaliana (Mouse-ear cress)).